A 167-amino-acid polypeptide reads, in one-letter code: Phosphopantetheine adenylyltransferase (167 aa).

Ser-9 is a binding site for substrate. ATP is bound by residues 9–10 and His-17; that span reads SF. Substrate is bound by residues Lys-41, Leu-73, and Lys-87. Residues 88 to 90, Glu-98, and 123 to 129 contribute to the ATP site; these read GLR and YSYLSSS.

This sequence belongs to the bacterial CoaD family. Homohexamer. Mg(2+) serves as cofactor.

The protein resides in the cytoplasm. The enzyme catalyses (R)-4'-phosphopantetheine + ATP + H(+) = 3'-dephospho-CoA + diphosphate. Its pathway is cofactor biosynthesis; coenzyme A biosynthesis; CoA from (R)-pantothenate: step 4/5. Its function is as follows. Reversibly transfers an adenylyl group from ATP to 4'-phosphopantetheine, yielding dephospho-CoA (dPCoA) and pyrophosphate. The polypeptide is Phosphopantetheine adenylyltransferase (Caldicellulosiruptor bescii (strain ATCC BAA-1888 / DSM 6725 / KCTC 15123 / Z-1320) (Anaerocellum thermophilum)).